The primary structure comprises 69 residues: uncharacterized protein (69 aa).

This is an uncharacterized protein from Bacillus anthracis.